Consider the following 478-residue polypeptide: Bifunctional protein HldE (478 aa).

The tract at residues 1-318 (MKVTLPDFRQ…ENAIRGRADT (318 aa)) is ribokinase. ATP is bound at residue 195–198 (NLSE). D264 is an active-site residue. A cytidylyltransferase region spans residues 344–478 (MTNGCFDILH…NMIKASTSQS (135 aa)).

The protein in the N-terminal section; belongs to the carbohydrate kinase PfkB family. It in the C-terminal section; belongs to the cytidylyltransferase family. As to quaternary structure, homodimer.

The catalysed reaction is D-glycero-beta-D-manno-heptose 7-phosphate + ATP = D-glycero-beta-D-manno-heptose 1,7-bisphosphate + ADP + H(+). The enzyme catalyses D-glycero-beta-D-manno-heptose 1-phosphate + ATP + H(+) = ADP-D-glycero-beta-D-manno-heptose + diphosphate. It participates in nucleotide-sugar biosynthesis; ADP-L-glycero-beta-D-manno-heptose biosynthesis; ADP-L-glycero-beta-D-manno-heptose from D-glycero-beta-D-manno-heptose 7-phosphate: step 1/4. It functions in the pathway nucleotide-sugar biosynthesis; ADP-L-glycero-beta-D-manno-heptose biosynthesis; ADP-L-glycero-beta-D-manno-heptose from D-glycero-beta-D-manno-heptose 7-phosphate: step 3/4. In terms of biological role, catalyzes the phosphorylation of D-glycero-D-manno-heptose 7-phosphate at the C-1 position to selectively form D-glycero-beta-D-manno-heptose-1,7-bisphosphate. Its function is as follows. Catalyzes the ADP transfer from ATP to D-glycero-beta-D-manno-heptose 1-phosphate, yielding ADP-D-glycero-beta-D-manno-heptose. The chain is Bifunctional protein HldE from Pectobacterium atrosepticum (strain SCRI 1043 / ATCC BAA-672) (Erwinia carotovora subsp. atroseptica).